Reading from the N-terminus, the 360-residue chain is G-protein coupled receptor 15 (360 aa).

Over 1–33 (MDPEETSVYLDYYYATSPNSDIRETHSHVPYTS) the chain is Extracellular. The chain crosses the membrane as a helical span at residues 34–54 (VFLPVFYTAVFLTGVLGNLVL). At 55 to 69 (MGALHFKPGSRRLID) the chain is on the cytoplasmic side. A helical membrane pass occupies residues 70-90 (IFIINLAASDFIFLVTLPLWV). At 91–120 (DKEASLGLWRTGSFLCKGSSYMISVNMHCS) the chain is on the extracellular side. A helical transmembrane segment spans residues 121 to 141 (VLLLTCMSVDRYLAIVWPVVS). Residues 142-149 (RKFRRTDC) are Cytoplasmic-facing. The chain crosses the membrane as a helical span at residues 150-170 (AYVVCASIWFISCLLGLPTLL). Residues 171 to 192 (SRELTLIDDKPYCAEKKATPIK) are Extracellular-facing. The chain crosses the membrane as a helical span at residues 193-213 (LIWSLVALIFTFFVPLLSIVT). At 214-239 (CYCCIARKLCAHYQQSGKHNKKLKKS) the chain is on the cytoplasmic side. The chain crosses the membrane as a helical span at residues 240-260 (IKIIFIVVAAFLVSWLPFNTF). Topologically, residues 261–284 (KFLAIVSGLRQEHYLPSAILQLGM) are extracellular. Residues 285–305 (EVSGPLAFANSCVNPFIYYIF) traverse the membrane as a helical segment. Residues 306–360 (DSYIRRAIVHCLCPCLKNYDFGSSTETSDSHLTKALSTFIHAEDFARRRKRSVSL) are Cytoplasmic-facing. S359 carries the phosphoserine modification.

The protein belongs to the G-protein coupled receptor 1 family. Interacts with adapter YWHAE; this interaction promotes ER-to-Golgi transport of GPR15. Interacts with GNAI1; this interaction initiates the signaling pathway. Phosphorylation is necessary for YWHAE binding and efficient surface expression. Post-translationally, O-glycosylated. Sialylated O-glycans in the N-terminal tail inhibits binding of GPR15LG. In terms of processing, sulfation is required for efficient binding of GPR15LG. In terms of tissue distribution, highly expressed in lymphoid tissues, including macrophages and peripheral blood mononuclear cells.

Its subcellular location is the cell membrane. In terms of biological role, g protein-coupled receptor that plays an important role in immune homeostasis. Acts via its natural ligand GPR15LG, a chemokine-like polypeptide strongly expressed in gastrointestinal tissues. GPR15-GPR15LG signaling axis regulates intestinal homeostasis and inflammation through the migration of immune cells. Controls thereby the specific homing of T-cells, particularly FOXP3+ regulatory T-cells (Tregs), to the large intestine lamina propria. Also required for skin localization of thymus-derived dendritic epidermal T-cells. Plays an important role in mediating cytoprotective function as well as angiogenesis of thrombomodulin. Mechanistically, preferentially signals through the Gi/o pathway to inhibit adenylate cyclase activity and activate a phosphatidylinositol-calcium second messenger system that regulates the release of Ca(2+) ions from intracellular stores. (Microbial infection) Acts as an alternative coreceptor with CD4 for HIV-1 infection. The protein is G-protein coupled receptor 15 (GPR15) of Homo sapiens (Human).